The primary structure comprises 190 residues: Shikimate kinase (190 aa).

ATP is bound at residue 14 to 19 (GSGKST). Ser-18 contacts Mg(2+). Substrate contacts are provided by Asp-36, Arg-60, and Gly-82. An ATP-binding site is contributed by Arg-120. Substrate is bound at residue Arg-147.

This sequence belongs to the shikimate kinase family. Monomer. It depends on Mg(2+) as a cofactor.

Its subcellular location is the cytoplasm. The catalysed reaction is shikimate + ATP = 3-phosphoshikimate + ADP + H(+). It functions in the pathway metabolic intermediate biosynthesis; chorismate biosynthesis; chorismate from D-erythrose 4-phosphate and phosphoenolpyruvate: step 5/7. Functionally, catalyzes the specific phosphorylation of the 3-hydroxyl group of shikimic acid using ATP as a cosubstrate. The polypeptide is Shikimate kinase (Chlorobium phaeobacteroides (strain DSM 266 / SMG 266 / 2430)).